The chain runs to 1117 residues: Guanylate cyclase D (1117 aa).

An N-terminal signal peptide occupies residues 1 to 66 (MAGLQQGCHF…ADSLSLLAWA (66 aa)). Over 67 to 479 (RETFTLGVLG…CIRGVQPLGS (413 aa)) the chain is Extracellular. A disulfide bridge links Cys-121 with Cys-149. The helical transmembrane segment at 480 to 500 (LLTLTIACVLALVGGFLAYFI) threads the bilayer. The Cytoplasmic portion of the chain corresponds to 501 to 1117 (RLGLQQLRLL…RKSGEAGPGP (617 aa)). The tract at residues 529–557 (TPSRRRPHVDSGSESRSVVDGGSPRSVTQ) is disordered. In terms of domain architecture, Protein kinase spans 541 to 812 (SESRSVVDGG…PSLDQIYTQF (272 aa)). Residues 874 to 915 (MGTTVEPEYFDQVTIYFSDIVGFTTISALSEPIEVVGFLNDL) are interaction with NCALD. In terms of domain architecture, Guanylate cyclase spans 887-1017 (TIYFSDIVGF…DTVNTASRME (131 aa)). Residues 1096-1117 (GFAKARQGLAEPRKSGEAGPGP) form a disordered region.

It belongs to the adenylyl cyclase class-4/guanylyl cyclase family. Interacts (via the catalytic domain) with NCALD. As to expression, found in a subset of olfactory neurons in the main olfactory epithelium.

Its subcellular location is the cell projection. The protein resides in the cilium membrane. The enzyme catalyses GTP = 3',5'-cyclic GMP + diphosphate. Activated by Ca(2+). In terms of biological role, functions as an olfactory receptor activated by urine odorants, uroguanylin and guanylin and as well by the volatile semiochemicals carbon disulfide (CS2) and carbon dioxide (CO2). Has guanylate cyclase activity upon binding of the ligand. Activation of GUCY2D neurons leads to the cGMP-dependent activation of the CNGA3 channels, membrane depolarization and an increase in action potential frequency. Signaling pathways activated by GUCY2D may trigger social behaviors such as acquisition of food preference. This is Guanylate cyclase D from Mus musculus (Mouse).